The chain runs to 492 residues: ATP synthase subunit beta, chloroplastic (492 aa).

170 to 177 provides a ligand contact to ATP; sequence GGAGVGKT.

Belongs to the ATPase alpha/beta chains family. F-type ATPases have 2 components, CF(1) - the catalytic core - and CF(0) - the membrane proton channel. CF(1) has five subunits: alpha(3), beta(3), gamma(1), delta(1), epsilon(1). CF(0) has four main subunits: a(1), b(1), b'(1) and c(9-12).

The protein localises to the plastid. It is found in the chloroplast thylakoid membrane. It carries out the reaction ATP + H2O + 4 H(+)(in) = ADP + phosphate + 5 H(+)(out). Its function is as follows. Produces ATP from ADP in the presence of a proton gradient across the membrane. The catalytic sites are hosted primarily by the beta subunits. In Angiopteris evecta (Mule's foot fern), this protein is ATP synthase subunit beta, chloroplastic.